A 1066-amino-acid chain; its full sequence is Hemoglobin and hemoglobin-haptoglobin-binding protein C (1066 aa).

A signal peptide spans 1 to 24 (MTNFKFTLLARSIAFALNASTAYA). 7 consecutive repeat copies span residues 26–29 (QPTN), 30–33 (QPTN), 34–37 (QPTN), 38–41 (QPTN), 42–45 (QPTN), 46–49 (QPTN), and 50–53 (QPTN). The tract at residues 26 to 53 (QPTNQPTNQPTNQPTNQPTNQPTNQPTN) is 7 X 4 AA tandem repeats of Q-P-T-N. A compositionally biased stretch (low complexity) spans 26-54 (QPTNQPTNQPTNQPTNQPTNQPTNQPTNQ). The interval 26–57 (QPTNQPTNQPTNQPTNQPTNQPTNQPTNQDSN) is disordered. The TonB box signature appears at 63-70 (EQINVSGS). The 135-residue stretch at 66–200 (NVSGSTETIN…LGGSVIFETK (135 aa)) folds into the TBDR plug domain. In terms of domain architecture, TBDR beta-barrel spans 208–1066 (DKDYYVSYKR…NYRMSVQFEF (859 aa)). The TonB C-terminal box motif lies at 1049–1066 (NRLYAPGRNYRMSVQFEF).

Belongs to the TonB-dependent receptor family. Hemoglobin/haptoglobin binding protein subfamily.

Its subcellular location is the cell outer membrane. Acts as a receptor for hemoglobin or the hemoglobin/haptoglobin complex of the human host and is required for heme uptake. This Haemophilus influenzae protein is Hemoglobin and hemoglobin-haptoglobin-binding protein C (hgpC).